A 113-amino-acid polypeptide reads, in one-letter code: UPF0122 protein M6_Spy0905 (113 aa).

The protein belongs to the UPF0122 family.

Its function is as follows. Might take part in the signal recognition particle (SRP) pathway. This is inferred from the conservation of its genetic proximity to ftsY/ffh. May be a regulatory protein. The polypeptide is UPF0122 protein M6_Spy0905 (Streptococcus pyogenes serotype M6 (strain ATCC BAA-946 / MGAS10394)).